The sequence spans 464 residues: uncharacterized protein (464 aa).

A signal peptide spans 1 to 24; the sequence is MSRFVPRIIPFYLLLLVAGGTANA.

Belongs to the intimin/invasin family.

It localises to the periplasm. This is an uncharacterized protein from Escherichia coli (strain K12).